We begin with the raw amino-acid sequence, 408 residues long: Peptidase T-like protein RB0614 (408 aa).

His80 lines the Zn(2+) pocket. The active site involves Asp82. A Zn(2+)-binding site is contributed by Asp142. Glu174 functions as the Proton acceptor in the catalytic mechanism. Zn(2+) is bound by residues Glu175, Asp198, and His380.

It belongs to the peptidase M20B family. Zn(2+) is required as a cofactor.

In Rhizobium meliloti (strain 1021) (Ensifer meliloti), this protein is Peptidase T-like protein RB0614.